The chain runs to 329 residues: Peroxidase 51 (329 aa).

A signal peptide spans 1–25; sequence MVVMNKTNLLLLILSLFLAINLSSA. Disulfide bonds link cysteine 36-cysteine 119, cysteine 69-cysteine 74, cysteine 125-cysteine 325, and cysteine 204-cysteine 236. The active-site Proton acceptor is histidine 67. 5 residues coordinate Ca(2+): aspartate 68, valine 71, glycine 73, aspartate 75, and serine 77. Proline 167 provides a ligand contact to substrate. Histidine 197 contributes to the heme b binding site. Position 198 (threonine 198) interacts with Ca(2+). Residue asparagine 215 is glycosylated (N-linked (GlcNAc...) asparagine). Ca(2+) contacts are provided by aspartate 249, threonine 252, and aspartate 257.

The protein belongs to the peroxidase family. Classical plant (class III) peroxidase subfamily. It depends on heme b as a cofactor. Requires Ca(2+) as cofactor.

The protein localises to the secreted. The catalysed reaction is 2 a phenolic donor + H2O2 = 2 a phenolic radical donor + 2 H2O. In terms of biological role, removal of H(2)O(2), oxidation of toxic reductants, biosynthesis and degradation of lignin, suberization, auxin catabolism, response to environmental stresses such as wounding, pathogen attack and oxidative stress. These functions might be dependent on each isozyme/isoform in each plant tissue. The protein is Peroxidase 51 (PER51) of Arabidopsis thaliana (Mouse-ear cress).